A 179-amino-acid chain; its full sequence is Inner membrane-spanning protein YciB (179 aa).

5 helical membrane passes run 3–23, 49–69, 76–96, 119–139, and 149–169; these read FLYDLFPVILFFIVYKLFGIY, NALIMSGVIIVVFGGATLWLQ, WKPTILYWVFTVGLLGSQWLF, LNLAWAIFFLLLGFLNLYVAY, and FKLFGTMGLMFVFVIGQTLLL.

This sequence belongs to the YciB family.

The protein localises to the cell inner membrane. Functionally, plays a role in cell envelope biogenesis, maintenance of cell envelope integrity and membrane homeostasis. This Methylobacillus flagellatus (strain ATCC 51484 / DSM 6875 / VKM B-1610 / KT) protein is Inner membrane-spanning protein YciB.